The sequence spans 309 residues: Electron transfer flavoprotein subunit alpha (309 aa).

Leu253–Asp281 contacts FAD.

Belongs to the ETF alpha-subunit/FixB family. In terms of assembly, heterodimer of an alpha and a beta subunit. FAD is required as a cofactor.

Its function is as follows. The electron transfer flavoprotein serves as a specific electron acceptor for other dehydrogenases. It transfers the electrons to the main respiratory chain via ETF-ubiquinone oxidoreductase (ETF dehydrogenase). In Pseudomonas aeruginosa (strain ATCC 15692 / DSM 22644 / CIP 104116 / JCM 14847 / LMG 12228 / 1C / PRS 101 / PAO1), this protein is Electron transfer flavoprotein subunit alpha (etfA).